A 223-amino-acid chain; its full sequence is Thymidylate kinase (223 aa).

Position 7–14 (7–14 (GIDGAGKS)) interacts with ATP.

Belongs to the thymidylate kinase family.

It catalyses the reaction dTMP + ATP = dTDP + ADP. Phosphorylation of dTMP to form dTDP in both de novo and salvage pathways of dTTP synthesis. The protein is Thymidylate kinase of Prosthecochloris aestuarii (strain DSM 271 / SK 413).